Consider the following 311-residue polypeptide: Transcriptional regulatory protein MoaR1 (311 aa).

The segment at residues 15-117 (LNATTAGAVQ…SEPPGYRLLI (103 aa)) is a DNA-binding region (ompR/PhoB-type).

Belongs to the AfsR/DnrI/RedD regulatory family.

Acts as a positive transcriptional regulator of the molybdopterin biosynthesis moa1 locus, promoting the expression of the moaA1B1C1D1 genes. The sequence is that of Transcriptional regulatory protein MoaR1 (moaR1) from Mycobacterium bovis (strain BCG / Pasteur 1173P2).